The primary structure comprises 273 residues: Hydroxyethylthiazole kinase (273 aa).

Met-47 contacts substrate. ATP-binding residues include Arg-123 and Thr-169. Position 196 (Gly-196) interacts with substrate.

It belongs to the Thz kinase family. It depends on Mg(2+) as a cofactor.

The enzyme catalyses 5-(2-hydroxyethyl)-4-methylthiazole + ATP = 4-methyl-5-(2-phosphooxyethyl)-thiazole + ADP + H(+). Its pathway is cofactor biosynthesis; thiamine diphosphate biosynthesis; 4-methyl-5-(2-phosphoethyl)-thiazole from 5-(2-hydroxyethyl)-4-methylthiazole: step 1/1. In terms of biological role, catalyzes the phosphorylation of the hydroxyl group of 4-methyl-5-beta-hydroxyethylthiazole (THZ). The chain is Hydroxyethylthiazole kinase from Desulfotalea psychrophila (strain LSv54 / DSM 12343).